Consider the following 180-residue polypeptide: Acireductone dioxygenase (180 aa).

Fe(2+) contacts are provided by histidine 97, histidine 99, glutamate 103, and histidine 141. Ni(2+)-binding residues include histidine 97, histidine 99, glutamate 103, and histidine 141.

It belongs to the acireductone dioxygenase (ARD) family. As to quaternary structure, monomer. Requires Fe(2+) as cofactor. Ni(2+) serves as cofactor.

The enzyme catalyses 1,2-dihydroxy-5-(methylsulfanyl)pent-1-en-3-one + O2 = 3-(methylsulfanyl)propanoate + CO + formate + 2 H(+). It carries out the reaction 1,2-dihydroxy-5-(methylsulfanyl)pent-1-en-3-one + O2 = 4-methylsulfanyl-2-oxobutanoate + formate + 2 H(+). The protein operates within amino-acid biosynthesis; L-methionine biosynthesis via salvage pathway; L-methionine from S-methyl-5-thio-alpha-D-ribose 1-phosphate: step 5/6. In terms of biological role, catalyzes 2 different reactions between oxygen and the acireductone 1,2-dihydroxy-3-keto-5-methylthiopentene (DHK-MTPene) depending upon the metal bound in the active site. Fe-containing acireductone dioxygenase (Fe-ARD) produces formate and 2-keto-4-methylthiobutyrate (KMTB), the alpha-ketoacid precursor of methionine in the methionine recycle pathway. Ni-containing acireductone dioxygenase (Ni-ARD) produces methylthiopropionate, carbon monoxide and formate, and does not lie on the methionine recycle pathway. This is Acireductone dioxygenase from Citrobacter koseri (strain ATCC BAA-895 / CDC 4225-83 / SGSC4696).